The chain runs to 430 residues: Purine nucleoside phosphorylase LACC1 (430 aa).

Lysine 247 bears the N6-acetyllysine mark. Histidine 250, cysteine 284, and histidine 301 together coordinate Zn(2+).

The protein belongs to the purine nucleoside phosphorylase YfiH/LACC1 family. As to quaternary structure, interacts with FASN. Interacts with SDHA. Interacts with ATF6, EIF2AK3 and ERN1. Phosphorylated on tyrosine residues. As to expression, predominantly expressed in myeloid cells. Highly expressed in primary macrophages and dendritic cells sorted from the peritoneum or spleen, respectively (at protein level).

It is found in the cytoplasm. The protein localises to the nucleus. Its subcellular location is the endoplasmic reticulum. It localises to the peroxisome. It catalyses the reaction adenosine + phosphate = alpha-D-ribose 1-phosphate + adenine. The enzyme catalyses inosine + phosphate = alpha-D-ribose 1-phosphate + hypoxanthine. It carries out the reaction guanosine + phosphate = alpha-D-ribose 1-phosphate + guanine. The catalysed reaction is S-methyl-5'-thioadenosine + phosphate = 5-(methylsulfanyl)-alpha-D-ribose 1-phosphate + adenine. It catalyses the reaction adenosine + H2O + H(+) = inosine + NH4(+). Its function is as follows. Purine nucleoside enzyme that catalyzes the phosphorolysis of adenosine, guanosine and inosine nucleosides, yielding D-ribose 1-phosphate and the respective free bases, adenine, guanine and hypoxanthine. Also catalyzes the phosphorolysis of S-methyl-5'-thioadenosine into adenine and S-methyl-5-thio-alpha-D-ribose 1-phosphate. Also has adenosine deaminase activity. Acts as a regulator of innate immunity in macrophages by modulating the purine nucleotide metabolism, thereby regulating the metabolic function and bioenergetic state of macrophages. Enables a purine nucleotide cycle between adenosine and inosine monophosphate and adenylosuccinate that prevents cytoplasmic acidification and balances the cytoplasmic-mitochondrial redox interface. The purine nucleotide cycle consumes aspartate and releases fumarate in a manner involving fatty acid oxidation and ATP-citrate lyase activity. Participates in pattern recognition receptor-induced cytokines in macrophages: associates with the NOD2-signaling complex and promotes optimal NOD2-induced signaling, cytokine secretion and bacterial clearance. Localizes to the endoplasmic reticulum upon PRR stimulation of macrophages and associates with endoplasmic reticulum-stress sensors, promoting the endoplasmic reticulum unfolded protein response (UPR). Does not show laccase activity. In Mus musculus (Mouse), this protein is Purine nucleoside phosphorylase LACC1.